We begin with the raw amino-acid sequence, 889 residues long: Translation initiation factor IF-2 (889 aa).

Disordered regions lie at residues 47–85 (GHLK…AKSV) and 206–302 (AEAA…FTKP). Composition is skewed to basic and acidic residues over residues 52 to 61 (QHGDESEAKP), 214 to 241 (AAKK…KEVV), and 252 to 263 (AEDKSDSADESG). Residues 389–558 (TRAPVVTIMG…LLQSEVLELT (170 aa)) enclose the tr-type G domain. Positions 398–405 (GHVDHGKT) are G1. Residue 398 to 405 (GHVDHGKT) coordinates GTP. Positions 423–427 (GITQH) are G2. The segment at 444 to 447 (DTPG) is G3. GTP-binding positions include 444 to 448 (DTPGH) and 498 to 501 (NKMD). A G4 region spans residues 498–501 (NKMD). A G5 region spans residues 534 to 536 (SAK).

The protein belongs to the TRAFAC class translation factor GTPase superfamily. Classic translation factor GTPase family. IF-2 subfamily.

The protein localises to the cytoplasm. Its function is as follows. One of the essential components for the initiation of protein synthesis. Protects formylmethionyl-tRNA from spontaneous hydrolysis and promotes its binding to the 30S ribosomal subunits. Also involved in the hydrolysis of GTP during the formation of the 70S ribosomal complex. The polypeptide is Translation initiation factor IF-2 (Colwellia psychrerythraea (strain 34H / ATCC BAA-681) (Vibrio psychroerythus)).